The chain runs to 173 residues: Transcription factor E (173 aa).

Residues 9–92 (ADKAIFAYLH…LWELELDNMY (84 aa)) form the HTH TFE/IIEalpha-type domain.

This sequence belongs to the TFE family. In terms of assembly, monomer. Interaction with RNA polymerase subunits RpoF and RpoE is necessary for Tfe stimulatory transcription activity. Able to interact with Tbp and RNA polymerase in the absence of DNA promoter. Interacts both with the preinitiation and elongation complexes.

Functionally, transcription factor that plays a role in the activation of archaeal genes transcribed by RNA polymerase. Facilitates transcription initiation by enhancing TATA-box recognition by TATA-box-binding protein (Tbp), and transcription factor B (Tfb) and RNA polymerase recruitment. Not absolutely required for transcription in vitro, but particularly important in cases where Tbp or Tfb function is not optimal. It dynamically alters the nucleic acid-binding properties of RNA polymerases by stabilizing the initiation complex and destabilizing elongation complexes. Seems to translocate with the RNA polymerase following initiation and acts by binding to the non template strand of the transcription bubble in elongation complexes. This is Transcription factor E from Methanospirillum hungatei JF-1 (strain ATCC 27890 / DSM 864 / NBRC 100397 / JF-1).